Consider the following 161-residue polypeptide: NADH-quinone oxidoreductase subunit I (161 aa).

2 4Fe-4S ferredoxin-type domains span residues 52–82 (LRRY…IESS) and 92–121 (TRYD…QGPN). Residues Cys-62, Cys-65, Cys-68, Cys-72, Cys-101, Cys-104, Cys-107, and Cys-111 each contribute to the [4Fe-4S] cluster site.

This sequence belongs to the complex I 23 kDa subunit family. As to quaternary structure, NDH-1 is composed of 14 different subunits. Subunits NuoA, H, J, K, L, M, N constitute the membrane sector of the complex. [4Fe-4S] cluster serves as cofactor.

The protein localises to the cell inner membrane. The catalysed reaction is a quinone + NADH + 5 H(+)(in) = a quinol + NAD(+) + 4 H(+)(out). In terms of biological role, NDH-1 shuttles electrons from NADH, via FMN and iron-sulfur (Fe-S) centers, to quinones in the respiratory chain. The immediate electron acceptor for the enzyme in this species is believed to be ubiquinone. Couples the redox reaction to proton translocation (for every two electrons transferred, four hydrogen ions are translocated across the cytoplasmic membrane), and thus conserves the redox energy in a proton gradient. This chain is NADH-quinone oxidoreductase subunit I, found in Pelagibacter ubique (strain HTCC1062).